The following is a 312-amino-acid chain: Nucleosome assembly protein 1-like 4 (312 aa).

Residues 24-78 (VETLKNKLQALAEQHVDVLESLAPSVRKRVDVLMEIQSQHDELEVKFFEEKAALE) are a coiled coil. The Nuclear export signal motif lies at 45-60 (LAPSVRKRVDVLMEIQ). The segment at 289-312 (DYGASWVDDEEEDDNNDEYSDEEA) is disordered.

This sequence belongs to the nucleosome assembly protein (NAP) family.

The protein resides in the nucleus. Its subcellular location is the cytoplasm. Functionally, may modulate chromatin structure by regulation of nucleosome assembly/disassembly. This Oryza sativa subsp. japonica (Rice) protein is Nucleosome assembly protein 1-like 4.